Here is a 953-residue protein sequence, read N- to C-terminus: Factor arrest protein 11 (953 aa).

Phosphoserine occurs at positions 18 and 81. Residues 104-160 are disordered; that stretch reads DIQQDSSDENDNFKFSDDGVNKDRNNEKDNNTDNAVEFQDDAEEAEEENEDESFANV. A compositionally biased stretch (basic and acidic residues) spans 114-134; sequence DNFKFSDDGVNKDRNNEKDNN. Acidic residues predominate over residues 141–160; the sequence is FQDDAEEAEEENEDESFANV. Phosphoserine occurs at positions 524, 527, and 528.

Belongs to the FAR11 family. In terms of assembly, component of a complex at least composed of FAR3, FAR7, FAR8, FAR10, FAR11 and VPS64.

Its function is as follows. Participates in the control of the reentry into the cell cycle following pheromone treatment. This is Factor arrest protein 11 (FAR11) from Saccharomyces cerevisiae (strain ATCC 204508 / S288c) (Baker's yeast).